The following is a 339-amino-acid chain: Enhancer of mRNA-decapping protein 1 (339 aa).

Disordered regions lie at residues 1 to 240 (MMMH…PPRY) and 309 to 339 (FPVN…SAKK). The span at 13–25 (SPGSENHSNPASR) shows a compositional bias: polar residues. Composition is skewed to basic and acidic residues over residues 26 to 38 (EQSK…ERRL) and 91 to 100 (DNKEKNKKLL). A compositionally biased stretch (low complexity) spans 111 to 131 (NFSFYSESNSNSNSNVSSNSN). The segment covering 163-173 (RPDKNGKKGPV) has biased composition (basic and acidic residues). The segment covering 196–212 (FQRTSPKQQANTINDEN) has biased composition (polar residues). Over residues 213 to 237 (SSPSSSASSVSMSSPRPVAGAVAAP) the composition is skewed to low complexity.

This sequence belongs to the EDC family.

It is found in the cytoplasm. In terms of biological role, mRNA-binding protein which stimulates mRNA decapping. This is Enhancer of mRNA-decapping protein 1 (EDC1) from Scheffersomyces stipitis (strain ATCC 58785 / CBS 6054 / NBRC 10063 / NRRL Y-11545) (Yeast).